The sequence spans 199 residues: Probable molybdenum cofactor guanylyltransferase (199 aa).

GTP-binding positions include 8–10 (LAG), Lys20, Asp65, and Asp96. Asp96 contributes to the Mg(2+) binding site.

Belongs to the MobA family. Requires Mg(2+) as cofactor.

It localises to the cytoplasm. It catalyses the reaction Mo-molybdopterin + GTP + H(+) = Mo-molybdopterin guanine dinucleotide + diphosphate. Its function is as follows. Transfers a GMP moiety from GTP to Mo-molybdopterin (Mo-MPT) cofactor (Moco or molybdenum cofactor) to form Mo-molybdopterin guanine dinucleotide (Mo-MGD) cofactor. This is Probable molybdenum cofactor guanylyltransferase from Bacillus subtilis (strain 168).